The following is a 593-amino-acid chain: Aspartate--tRNA(Asp/Asn) ligase (593 aa).

Residue Glu-175 participates in L-aspartate binding. The segment at 199-202 (QQYK) is aspartate. Residues Arg-221 and His-452 each coordinate L-aspartate. An ATP-binding site is contributed by 221–223 (RDE). Glu-486 contributes to the ATP binding site. L-aspartate is bound at residue Arg-493. 538-541 (GVDR) contacts ATP.

It belongs to the class-II aminoacyl-tRNA synthetase family. Type 1 subfamily. In terms of assembly, homodimer.

The protein localises to the cytoplasm. It catalyses the reaction tRNA(Asx) + L-aspartate + ATP = L-aspartyl-tRNA(Asx) + AMP + diphosphate. Functionally, aspartyl-tRNA synthetase with relaxed tRNA specificity since it is able to aspartylate not only its cognate tRNA(Asp) but also tRNA(Asn). Reaction proceeds in two steps: L-aspartate is first activated by ATP to form Asp-AMP and then transferred to the acceptor end of tRNA(Asp/Asn). The sequence is that of Aspartate--tRNA(Asp/Asn) ligase from Novosphingobium aromaticivorans (strain ATCC 700278 / DSM 12444 / CCUG 56034 / CIP 105152 / NBRC 16084 / F199).